The chain runs to 375 residues: Glutamate 5-kinase (375 aa).

Lys3 is an ATP binding site. The substrate site is built by Ser44, Asp131, and Asn143. ATP is bound by residues Ser163–Asp164 and Thr205–Lys211. One can recognise a PUA domain in the interval Glu269–Arg346.

The protein belongs to the glutamate 5-kinase family.

Its subcellular location is the cytoplasm. It carries out the reaction L-glutamate + ATP = L-glutamyl 5-phosphate + ADP. It participates in amino-acid biosynthesis; L-proline biosynthesis; L-glutamate 5-semialdehyde from L-glutamate: step 1/2. Functionally, catalyzes the transfer of a phosphate group to glutamate to form L-glutamate 5-phosphate. In Rhodospirillum rubrum (strain ATCC 11170 / ATH 1.1.1 / DSM 467 / LMG 4362 / NCIMB 8255 / S1), this protein is Glutamate 5-kinase.